The primary structure comprises 145 residues: Arginine repressor (145 aa).

This sequence belongs to the ArgR family.

Its subcellular location is the cytoplasm. It functions in the pathway amino-acid biosynthesis; L-arginine biosynthesis [regulation]. Functionally, regulates arginine biosynthesis genes. The sequence is that of Arginine repressor from Streptococcus mutans serotype c (strain ATCC 700610 / UA159).